A 337-amino-acid polypeptide reads, in one-letter code: LIX1-like protein (337 aa).

The interval 1–64 (METMRAQRLQ…PLLLSGAPGL (64 aa)) is disordered. The segment covering 26 to 38 (PGVTGAAAATATP) has biased composition (low complexity). Pro residues predominate over residues 39–56 (PAGPPPAPPPPAPPPPPL).

Belongs to the LIX1 family.

This chain is LIX1-like protein (LIX1L), found in Homo sapiens (Human).